The following is a 323-amino-acid chain: Aldo-keto reductase family 1 member C2 (323 aa).

NADP(+) contacts are provided by residues 20–24 (GFGTY) and aspartate 50. Tyrosine 24 contributes to the substrate binding site. The Proton donor role is filled by tyrosine 55. Histidine 117 provides a ligand contact to substrate. NADP(+) is bound by residues 166–167 (SN), glutamine 190, and 216–222 (YSALGSH). Positions 222 and 227 each coordinate substrate. 270–280 (KSYNEQRIRQN) is an NADP(+) binding site.

Belongs to the aldo/keto reductase family. Expressed in fetal testes. Expressed in fetal and adult adrenal glands.

It is found in the cytoplasm. It localises to the cytosol. It catalyses the reaction a 3alpha-hydroxysteroid + NADP(+) = a 3-oxosteroid + NADPH + H(+). The enzyme catalyses a 3alpha-hydroxysteroid + NAD(+) = a 3-oxosteroid + NADH + H(+). It carries out the reaction 5alpha-androstane-3alpha,17beta-diol + NADP(+) = 17beta-hydroxy-5alpha-androstan-3-one + NADPH + H(+). The catalysed reaction is 5alpha-androstane-3alpha,17beta-diol + NAD(+) = 17beta-hydroxy-5alpha-androstan-3-one + NADH + H(+). It catalyses the reaction 5alpha-androstane-3alpha,17beta-diol + NAD(+) = androsterone + NADH + H(+). The enzyme catalyses 17beta-estradiol + NADP(+) = estrone + NADPH + H(+). It carries out the reaction 17beta-estradiol + NAD(+) = estrone + NADH + H(+). The catalysed reaction is (20S)-hydroxypregn-4-en-3-one + NADP(+) = progesterone + NADPH + H(+). It catalyses the reaction (20S)-hydroxypregn-4-en-3-one + NAD(+) = progesterone + NADH + H(+). The enzyme catalyses androsterone + NADP(+) = 5alpha-androstan-3,17-dione + NADPH + H(+). It carries out the reaction (3beta,5alpha,17beta)-3-hydroxy-androstan-17-yl sulfate + NADP(+) = 5alpha-dihydrotestosterone sulfate + NADPH + H(+). The catalysed reaction is (1R,2R)-1,2-dihydrobenzene-1,2-diol + NADP(+) = catechol + NADPH + H(+). It catalyses the reaction (S)-indan-1-ol + NAD(+) = indan-1-one + NADH + H(+). The enzyme catalyses (S)-indan-1-ol + NADP(+) = indan-1-one + NADPH + H(+). Its pathway is steroid metabolism. Inhibited by hexestrol with an IC(50) of 2.8 uM, 1,10-phenanthroline with an IC(50) of 2100 uM, 1,7-phenanthroline with an IC(50) of 1500 uM, flufenamic acid with an IC(50) of 0.9 uM, indomethacin with an IC(50) of 75 uM, ibuprofen with an IC(50) of 6.9 uM, lithocholic acid with an IC(50) of 0.07 uM, ursodeoxycholic acid with an IC(50) of 0.08 uM and chenodeoxycholic acid with an IC(50) of 0.13 uM. The oxidation reaction is inhibited by low micromolar concentrations of NADPH. Cytosolic aldo-keto reductase that catalyzes the NADH and NADPH-dependent reduction of ketosteroids to hydroxysteroids. Most probably acts as a reductase in vivo since the oxidase activity measured in vitro is inhibited by physiological concentrations of NADPH. Displays a broad positional specificity acting on positions 3, 17 and 20 of steroids and regulates the metabolism of hormones like estrogens and androgens. Works in concert with the 5-alpha/5-beta-steroid reductases to convert steroid hormones into the 3-alpha/5-alpha and 3-alpha/5-beta-tetrahydrosteroids. Catalyzes the inactivation of the most potent androgen 5-alpha-dihydrotestosterone (5-alpha-DHT) to 5-alpha-androstane-3-alpha,17-beta-diol (3-alpha-diol). Also specifically able to produce 17beta-hydroxy-5alpha-androstan-3-one/5alphaDHT. May also reduce conjugated steroids such as 5alpha-dihydrotestosterone sulfate. Displays affinity for bile acids. This is Aldo-keto reductase family 1 member C2 (AKR1C2) from Homo sapiens (Human).